The chain runs to 139 residues: Thiosulfate:glutathione sulfurtransferase (139 aa).

Residue Ser26 is modified to Phosphoserine. Residues 37-138 (HDPNVVLVDV…WVSHGGDKLD (102 aa)) form the Rhodanese domain. The Cysteine persulfide intermediate role is filled by Cys98.

It is found in the mitochondrion. It carries out the reaction thiosulfate + glutathione = S-sulfanylglutathione + sulfite + H(+). With respect to regulation, GSS(-) is a potent inhibitor of RDL1, since the presence of the sulfur dioxygenase strongly increases the RDL1 catalytic activity. Its function is as follows. Thiosulfate:glutathione sulfurtransferase (TST) required to produce S-sulfanylglutathione (GSS(-)), a central intermediate in hydrogen sulfide metabolism. Provides the link between the first step in H(2)S metabolism performed by the sulfide:quinone oxidoreductase (SQOR) which catalyzes the conversion of H(2)S to thiosulfate, and the sulfur dioxygenase (SDO) which uses GSS(-) as substrate. The thermodynamic coupling of the irreversible SDO and reversible TST reactions provides a model for the physiologically relevant reaction with thiosulfate as the sulfane donor. The polypeptide is Thiosulfate:glutathione sulfurtransferase (RDL1) (Saccharomyces cerevisiae (strain ATCC 204508 / S288c) (Baker's yeast)).